Reading from the N-terminus, the 323-residue chain is tRNA dimethylallyltransferase (323 aa).

An ATP-binding site is contributed by 12-19 (GPTAAGKT). 14–19 (TAAGKT) is a binding site for substrate. Interaction with substrate tRNA stretches follow at residues 37-40 (DSAL) and 161-165 (QRLMR).

The protein belongs to the IPP transferase family. In terms of assembly, monomer. It depends on Mg(2+) as a cofactor.

It carries out the reaction adenosine(37) in tRNA + dimethylallyl diphosphate = N(6)-dimethylallyladenosine(37) in tRNA + diphosphate. Functionally, catalyzes the transfer of a dimethylallyl group onto the adenine at position 37 in tRNAs that read codons beginning with uridine, leading to the formation of N6-(dimethylallyl)adenosine (i(6)A). This chain is tRNA dimethylallyltransferase, found in Pseudomonas aeruginosa (strain LESB58).